The chain runs to 133 residues: Large ribosomal subunit protein eL32 (133 aa).

Belongs to the eukaryotic ribosomal protein eL32 family.

The sequence is that of Large ribosomal subunit protein eL32 (rpl32) from Dictyostelium discoideum (Social amoeba).